Reading from the N-terminus, the 104-residue chain is Ig lambda-2 chain C region (104 aa).

One can recognise an Ig-like domain in the interval 6–99; the sequence is PTLTVFPPSS…EGDTVEKSLS (94 aa). A disulfide bond links C27 and C85.

This is Ig lambda-2 chain C region (Iglc2) from Mus musculus (Mouse).